A 118-amino-acid chain; its full sequence is Beta-2-microglobulin (118 aa).

The first 20 residues, 1-20 (MARFVVLVLLGLLYLSHLDA), serve as a signal peptide directing secretion. Positions 25 to 113 (PKVQVYSRHP…TTLSEPKVVK (89 aa)) constitute an Ig-like C1-type domain. Residues C45 and C99 are joined by a disulfide bond.

The protein belongs to the beta-2-microglobulin family. As to quaternary structure, heterodimer of an alpha chain and a beta chain. Beta-2-microglobulin is the beta-chain of major histocompatibility complex class I molecules.

Its subcellular location is the secreted. Its function is as follows. Component of the class I major histocompatibility complex (MHC). Involved in the presentation of peptide antigens to the immune system. This Felis catus (Cat) protein is Beta-2-microglobulin (B2M).